Reading from the N-terminus, the 89-residue chain is Small ribosomal subunit protein uS15 (89 aa).

The protein belongs to the universal ribosomal protein uS15 family. In terms of assembly, part of the 30S ribosomal subunit. Forms a bridge to the 50S subunit in the 70S ribosome, contacting the 23S rRNA.

One of the primary rRNA binding proteins, it binds directly to 16S rRNA where it helps nucleate assembly of the platform of the 30S subunit by binding and bridging several RNA helices of the 16S rRNA. Its function is as follows. Forms an intersubunit bridge (bridge B4) with the 23S rRNA of the 50S subunit in the ribosome. The protein is Small ribosomal subunit protein uS15 of Caulobacter vibrioides (strain NA1000 / CB15N) (Caulobacter crescentus).